The sequence spans 121 residues: Small ribosomal subunit protein uS11 (121 aa).

The protein belongs to the universal ribosomal protein uS11 family. As to quaternary structure, part of the 30S ribosomal subunit. Interacts with proteins S7 and S18. Binds to IF-3.

Functionally, located on the platform of the 30S subunit, it bridges several disparate RNA helices of the 16S rRNA. Forms part of the Shine-Dalgarno cleft in the 70S ribosome. The sequence is that of Small ribosomal subunit protein uS11 from Mycoplasma genitalium (strain ATCC 33530 / DSM 19775 / NCTC 10195 / G37) (Mycoplasmoides genitalium).